Consider the following 410-residue polypeptide: Phytoene synthase 1, chloroplastic (410 aa).

A chloroplast-targeting transit peptide spans 1–62; it reads MAIILVRAAS…EAGRPSPAVY (62 aa).

This sequence belongs to the phytoene/squalene synthase family. As to quaternary structure, monomer. In terms of tissue distribution, expressed in embryos, endosperm and seedling leaves. Expressed in leaves and endosperm.

The protein resides in the plastid. It localises to the chloroplast stroma. It catalyses the reaction 2 (2E,6E,10E)-geranylgeranyl diphosphate = 15-cis-phytoene + 2 diphosphate. Its pathway is carotenoid biosynthesis; phytoene biosynthesis; all-trans-phytoene from geranylgeranyl diphosphate: step 1/1. In terms of biological role, catalyzes the conversion of geranylgeranyl diphosphate to phytoene. Mediates the first committed step in carotenoid biosynthesis. In Zea mays (Maize), this protein is Phytoene synthase 1, chloroplastic.